An 827-amino-acid polypeptide reads, in one-letter code: Glycerol-3-phosphate acyltransferase (827 aa).

The HXXXXD motif signature appears at 325–330 (CHRSHM).

This sequence belongs to the GPAT/DAPAT family.

It is found in the cell inner membrane. The catalysed reaction is sn-glycerol 3-phosphate + an acyl-CoA = a 1-acyl-sn-glycero-3-phosphate + CoA. It functions in the pathway phospholipid metabolism; CDP-diacylglycerol biosynthesis; CDP-diacylglycerol from sn-glycerol 3-phosphate: step 1/3. The protein is Glycerol-3-phosphate acyltransferase of Escherichia coli (strain SMS-3-5 / SECEC).